We begin with the raw amino-acid sequence, 329 residues long: Probable aryl-alcohol dehydrogenase AAD4 (329 aa).

Tyr30 (proton donor) is an active-site residue. Residue His105 participates in substrate binding. 190-200 (DVMGGGRFQSK) contacts NADP(+).

Belongs to the aldo/keto reductase family. Aldo/keto reductase 2 subfamily.

This chain is Probable aryl-alcohol dehydrogenase AAD4 (AAD4), found in Saccharomyces cerevisiae (strain ATCC 204508 / S288c) (Baker's yeast).